A 400-amino-acid chain; its full sequence is Nicotinate phosphoribosyltransferase (400 aa).

His220 is modified (phosphohistidine; by autocatalysis).

This sequence belongs to the NAPRTase family. Post-translationally, transiently phosphorylated on a His residue during the reaction cycle. Phosphorylation strongly increases the affinity for substrates and increases the rate of nicotinate D-ribonucleotide production. Dephosphorylation regenerates the low-affinity form of the enzyme, leading to product release.

It carries out the reaction nicotinate + 5-phospho-alpha-D-ribose 1-diphosphate + ATP + H2O = nicotinate beta-D-ribonucleotide + ADP + phosphate + diphosphate. It participates in cofactor biosynthesis; NAD(+) biosynthesis; nicotinate D-ribonucleotide from nicotinate: step 1/1. In terms of biological role, catalyzes the synthesis of beta-nicotinate D-ribonucleotide from nicotinate and 5-phospho-D-ribose 1-phosphate at the expense of ATP. The polypeptide is Nicotinate phosphoribosyltransferase (Salmonella agona (strain SL483)).